The sequence spans 313 residues: Olfactory receptor 10Z1 (313 aa).

At 1 to 25 (MGQTNVTSWRDFVFLGFSSSGELQL) the chain is on the extracellular side. N-linked (GlcNAc...) asparagine glycosylation is present at N5. The helical transmembrane segment at 26–46 (LLFALFLSLYLVTLTSNVFII) threads the bilayer. The Cytoplasmic segment spans residues 47-54 (IAIRLDSH). A helical transmembrane segment spans residues 55-75 (LHTPMYLFLSFLSFSETCYTL). Over 76 to 99 (GIIPRMLSGLAGGDQAISYVGCAA) the chain is Extracellular. C97 and C189 are disulfide-bonded. Residues 100–120 (QMFFSASWACTNCFLLAAMGF) form a helical membrane-spanning segment. Topologically, residues 121–139 (DRYVAICAPLHYASHMNPT) are cytoplasmic. A helical transmembrane segment spans residues 140–160 (LCAQLVITSFLTGYLFGLGMT). Topologically, residues 161 to 197 (LVIFHLSFCSSHEIQHFFCDTPPVLSLACGDTGPSEL) are extracellular. A helical membrane pass occupies residues 198–217 (RIFILSLLVLLVSFFFITIS). Over 218–237 (YAYILAAILRIPSAEGQKKA) the chain is Cytoplasmic. A helical membrane pass occupies residues 238-258 (FSTCASHLTVVIIHYGCASFV). Over 259 to 271 (YLRPKASYSLERD) the chain is Extracellular. Residues 272-292 (QLIAMTYTVVTPLLNPIVYSL) form a helical membrane-spanning segment. The Cytoplasmic segment spans residues 293–313 (RNRAIQTALRNAFRGRLLGKG).

It belongs to the G-protein coupled receptor 1 family.

Its subcellular location is the cell membrane. Odorant receptor. This chain is Olfactory receptor 10Z1 (OR10Z1), found in Homo sapiens (Human).